The primary structure comprises 299 residues: Oxygen-dependent coproporphyrinogen-III oxidase (299 aa).

A substrate-binding site is contributed by S92. The a divalent metal cation site is built by H96 and H106. H106 (proton donor) is an active-site residue. 108-110 is a binding site for substrate; the sequence is NVR. A divalent metal cation is bound by residues H145 and H175. The important for dimerization stretch occupies residues 240–275; the sequence is YVEFNLVWDRGTLFGLQTGGRTESILMSMPPLVRWE. Residue 258–260 coordinates substrate; it reads GGR.

It belongs to the aerobic coproporphyrinogen-III oxidase family. Homodimer. Requires a divalent metal cation as cofactor.

Its subcellular location is the cytoplasm. The enzyme catalyses coproporphyrinogen III + O2 + 2 H(+) = protoporphyrinogen IX + 2 CO2 + 2 H2O. Its pathway is porphyrin-containing compound metabolism; protoporphyrin-IX biosynthesis; protoporphyrinogen-IX from coproporphyrinogen-III (O2 route): step 1/1. Functionally, involved in the heme biosynthesis. Catalyzes the aerobic oxidative decarboxylation of propionate groups of rings A and B of coproporphyrinogen-III to yield the vinyl groups in protoporphyrinogen-IX. The protein is Oxygen-dependent coproporphyrinogen-III oxidase of Salmonella dublin (strain CT_02021853).